The primary structure comprises 520 residues: Nuclear GTP-binding protein NUG1 (520 aa).

2 stretches are compositionally biased toward basic residues: residues 1–13 and 21–34; these read MRVR…RTST and KKAS…KKMA. A disordered region spans residues 1 to 53; sequence MRVRKRQSRRTSTKLKEGIKKKASAHRKKEKKMAKKDVTWRSRSKKDPGIPSN. Basic and acidic residues predominate over residues 35–48; that stretch reads KKDVTWRSRSKKDP. The region spanning 165–343 is the CP-type G domain; sequence YDKIFKSVID…ILDSPGICFP (179 aa). GTP is bound by residues 213-216, 287-294, and 336-339; these read NKVD, GYPNVGKS, and DSPG. Phosphoserine is present on S337.

This sequence belongs to the TRAFAC class YlqF/YawG GTPase family.

It localises to the nucleus. Its function is as follows. GTPase required for 60S ribosomal subunit export to the cytoplasm. This is Nuclear GTP-binding protein NUG1 (NUG1) from Saccharomyces cerevisiae (strain ATCC 204508 / S288c) (Baker's yeast).